The primary structure comprises 338 residues: Ketol-acid reductoisomerase (NADP(+)) (338 aa).

The region spanning 1 to 181 (MKVYYDKDAD…GGGKAGIIET (181 aa)) is the KARI N-terminal Rossmann domain. Residues 24–27 (YGSQ), R47, and S52 each bind NADP(+). The active site involves H107. G133 serves as a coordination point for NADP(+). One can recognise a KARI C-terminal knotted domain in the interval 182–327 (NFREETETDL…EKLRAMMPWI (146 aa)). 4 residues coordinate Mg(2+): D190, E194, E226, and E230. Position 251 (S251) interacts with substrate.

This sequence belongs to the ketol-acid reductoisomerase family. It depends on Mg(2+) as a cofactor.

It catalyses the reaction (2R)-2,3-dihydroxy-3-methylbutanoate + NADP(+) = (2S)-2-acetolactate + NADPH + H(+). The catalysed reaction is (2R,3R)-2,3-dihydroxy-3-methylpentanoate + NADP(+) = (S)-2-ethyl-2-hydroxy-3-oxobutanoate + NADPH + H(+). It participates in amino-acid biosynthesis; L-isoleucine biosynthesis; L-isoleucine from 2-oxobutanoate: step 2/4. Its pathway is amino-acid biosynthesis; L-valine biosynthesis; L-valine from pyruvate: step 2/4. Involved in the biosynthesis of branched-chain amino acids (BCAA). Catalyzes an alkyl-migration followed by a ketol-acid reduction of (S)-2-acetolactate (S2AL) to yield (R)-2,3-dihydroxy-isovalerate. In the isomerase reaction, S2AL is rearranged via a Mg-dependent methyl migration to produce 3-hydroxy-3-methyl-2-ketobutyrate (HMKB). In the reductase reaction, this 2-ketoacid undergoes a metal-dependent reduction by NADPH to yield (R)-2,3-dihydroxy-isovalerate. This Methylibium petroleiphilum (strain ATCC BAA-1232 / LMG 22953 / PM1) protein is Ketol-acid reductoisomerase (NADP(+)).